The primary structure comprises 328 residues: V-set and immunoglobulin domain-containing protein 2 (328 aa).

The N-terminal stretch at 1–24 (MAWPLVGAFLCGHLLGFVCLSGLA) is a signal peptide. The 114-residue stretch at 25–138 (VEVTVPTEPL…DFYTNGLGLI (114 aa)) folds into the Ig-like V-type domain. Residues 25-244 (VEVTVPTEPL…VTDSSEGRVA (220 aa)) are Extracellular-facing. A disulfide bridge connects residues Cys-46 and Cys-122. Residues Asn-139, Asn-207, and Asn-232 are each glycosylated (N-linked (GlcNAc...) asparagine). In terms of domain architecture, Ig-like C2-type spans 145-234 (PPSHPLCSQS…GSASCELNLS (90 aa)). A disulfide bridge connects residues Cys-167 and Cys-218. Residues 245–265 (GTLIGVLLGVLLLSVAAFCLI) traverse the membrane as a helical segment. Topologically, residues 266 to 328 (RFQKERKKEP…TTKSKLSMVV (63 aa)) are cytoplasmic.

In terms of tissue distribution, expressed in the stomach, colon and prostate.

The protein localises to the membrane. The protein is V-set and immunoglobulin domain-containing protein 2 (Vsig2) of Mus musculus (Mouse).